The chain runs to 393 residues: Nuclear hormone receptor family member nhr-90 (393 aa).

The nuclear receptor DNA-binding region spans 6–79 (LQTCKICGAE…AGMKIEYFQH (74 aa)). An NR C4-type zinc finger spans residues 9-30 (CKICGAENTRGNHFGVQCCRAC). The NR C4-type; degenerate zinc finger occupies 47 to 62 (CLSVHCGEAARFCKPC). The NR LBD domain occupies 121 to 388 (DLNSLVGKAS…FSHPEMFIDT (268 aa)).

It belongs to the nuclear hormone receptor family.

It localises to the nucleus. Functionally, orphan nuclear receptor. In Caenorhabditis elegans, this protein is Nuclear hormone receptor family member nhr-90 (nhr-90).